The sequence spans 321 residues: uncharacterized protein (321 aa).

V2 carries the N-acetylvaline modification. Positions 37–63 are disordered; the sequence is SEASRLLTPQTSSNHALSKMQKDDDIR. Residues 43-52 show a composition bias toward polar residues; it reads LTPQTSSNHA. T44 carries the phosphothreonine modification. Residues S49, S69, S121, S126, S129, S137, and S139 each carry the phosphoserine modification. Disordered stretches follow at residues 115-270 and 283-321; these read KKQR…YSIS and ETLE…AQPQ. 3 stretches are compositionally biased toward polar residues: residues 120–145, 153–162, and 178–189; these read KSIN…TSTD, KYSSSGTPEN, and SYGQMIKNNSNR. T159 carries the post-translational modification Phosphothreonine. Over residues 204–229 the composition is skewed to basic and acidic residues; the sequence is EIDHTAPEKSEKRQERSGRSFDRQKS. The span at 237–253 shows a compositional bias: polar residues; that stretch reads LSRSISRGPTKNKTVSP. Residues S238, S240, S242, and S270 each carry the phosphoserine modification. The span at 284–305 shows a compositional bias: acidic residues; sequence TLEEEQEDAEKEGVLMEDEGNE. A compositionally biased stretch (basic and acidic residues) spans 306 to 315; it reads EYTKDLEEAA.

The protein resides in the cytoplasm. This is an uncharacterized protein from Saccharomyces cerevisiae (strain ATCC 204508 / S288c) (Baker's yeast).